We begin with the raw amino-acid sequence, 228 residues long: MEDSPLPDLRDIELKLGRKVPESLVRSLRGEEPVPRERDRDPCGGSGGGGGGGGGCSSSSSYCSFPPSLSSSSSSSPTSGSPRGSHSSALERLETKLHLLRQEMVNLRATDVRLMRQLLVINESIESIKWMIEEKATITSRGSSLSGSLCSLLESQSTSLRGSYNSLHDGSDGLDGISVGSYLDTLADDVPGHQTPSDLDQFSDSSLIEDSQALHKRPKLDSEYYCFG.

M1 carries the post-translational modification N-acetylmethionine. Residues 1–89 (MEDSPLPDLR…GSPRGSHSSA (89 aa)) form a disordered region. Composition is skewed to basic and acidic residues over residues 8 to 21 (DLRD…RKVP) and 28 to 42 (LRGE…DRDP). Over residues 44-56 (GGSGGGGGGGGGC) the composition is skewed to gly residues. Low complexity predominate over residues 57–88 (SSSSSYCSFPPSLSSSSSSSPTSGSPRGSHSS).

This chain is Leucine rich adaptor protein 1-like (LURAP1L), found in Homo sapiens (Human).